The primary structure comprises 170 residues: ATP synthase subunit b (170 aa).

Residues 22–41 (ILNWAVVVFGLYKFLPGFLG) traverse the membrane as a helical segment. A disordered region spans residues 72–98 (AKKDLSSAEEKASQIKADSLKRSESIR).

This sequence belongs to the ATPase B chain family. In terms of assembly, F-type ATPases have 2 components, F(1) - the catalytic core - and F(0) - the membrane proton channel. F(1) has five subunits: alpha(3), beta(3), gamma(1), delta(1), epsilon(1). F(0) has four main subunits: a(1), b(1), b'(1) and c(10-14). The alpha and beta chains form an alternating ring which encloses part of the gamma chain. F(1) is attached to F(0) by a central stalk formed by the gamma and epsilon chains, while a peripheral stalk is formed by the delta, b and b' chains.

It localises to the cellular thylakoid membrane. In terms of biological role, f(1)F(0) ATP synthase produces ATP from ADP in the presence of a proton or sodium gradient. F-type ATPases consist of two structural domains, F(1) containing the extramembraneous catalytic core and F(0) containing the membrane proton channel, linked together by a central stalk and a peripheral stalk. During catalysis, ATP synthesis in the catalytic domain of F(1) is coupled via a rotary mechanism of the central stalk subunits to proton translocation. Its function is as follows. Component of the F(0) channel, it forms part of the peripheral stalk, linking F(1) to F(0). This Prochlorococcus marinus (strain MIT 9301) protein is ATP synthase subunit b.